The chain runs to 475 residues: Aspartyl/glutamyl-tRNA(Asn/Gln) amidotransferase subunit B (475 aa).

It belongs to the GatB/GatE family. GatB subfamily. Heterotrimer of A, B and C subunits.

It catalyses the reaction L-glutamyl-tRNA(Gln) + L-glutamine + ATP + H2O = L-glutaminyl-tRNA(Gln) + L-glutamate + ADP + phosphate + H(+). It carries out the reaction L-aspartyl-tRNA(Asn) + L-glutamine + ATP + H2O = L-asparaginyl-tRNA(Asn) + L-glutamate + ADP + phosphate + 2 H(+). In terms of biological role, allows the formation of correctly charged Asn-tRNA(Asn) or Gln-tRNA(Gln) through the transamidation of misacylated Asp-tRNA(Asn) or Glu-tRNA(Gln) in organisms which lack either or both of asparaginyl-tRNA or glutaminyl-tRNA synthetases. The reaction takes place in the presence of glutamine and ATP through an activated phospho-Asp-tRNA(Asn) or phospho-Glu-tRNA(Gln). The chain is Aspartyl/glutamyl-tRNA(Asn/Gln) amidotransferase subunit B from Staphylococcus aureus (strain MRSA252).